The primary structure comprises 194 residues: Methylthioribulose-1-phosphate dehydratase (194 aa).

The Zn(2+) site is built by His84 and His86.

It belongs to the aldolase class II family. MtnB subfamily. Zn(2+) is required as a cofactor.

It catalyses the reaction 5-(methylsulfanyl)-D-ribulose 1-phosphate = 5-methylsulfanyl-2,3-dioxopentyl phosphate + H2O. It participates in amino-acid biosynthesis; L-methionine biosynthesis via salvage pathway; L-methionine from S-methyl-5-thio-alpha-D-ribose 1-phosphate: step 2/6. Functionally, catalyzes the dehydration of methylthioribulose-1-phosphate (MTRu-1-P) into 2,3-diketo-5-methylthiopentyl-1-phosphate (DK-MTP-1-P). This chain is Methylthioribulose-1-phosphate dehydratase, found in Cronobacter sakazakii (Enterobacter sakazakii).